Reading from the N-terminus, the 219-residue chain is GPI-anchored hemophore PGA7 (219 aa).

Residues 1–13 (MHFIFYLILLVSA) form the signal peptide. Residues 17–126 (GNFGTYPKVP…SMLSTAAGDA (110 aa)) form the CFEM domain. 4 disulfide bridges follow: Cys45-Cys85, Cys49-Cys80, Cys59-Cys66, and Cys68-Cys101. Asp63 serves as a coordination point for heme. Positions 151-194 (VVSETGSASETGSSESAQSTTTGSSSTGSSSTDSSSSSSSSPSS) are disordered. A compositionally biased stretch (low complexity) spans 153–194 (SETGSASETGSSESAQSTTTGSSSTGSSSTDSSSSSSSSPSS). Ser194 carries GPI-anchor amidated serine lipidation. Residues 195–219 (SANFAVLQTGGIGSVILGFMMYLLV) constitute a propeptide, removed in mature form.

It belongs to the RBT5 family. In terms of assembly, interacts with RBT5. The GPI-anchor is attached to the protein in the endoplasmic reticulum and serves to target the protein to the cell surface. There, the glucosamine-inositol phospholipid moiety is cleaved off and the GPI-modified mannoprotein is covalently attached via its lipidless GPI glycan remnant to the 1,6-beta-glucan of the outer cell wall layer.

It is found in the secreted. Its subcellular location is the cell wall. The protein localises to the cell membrane. Functionally, GPI-linked hyphal surface heme-binding protein involved in heme-iron utilization. Heme transfer occurs between PGA7, RBT5 and CSA2 supporting a model in which the 3 CFEM proteins cooperate in a heme-acquisition system and form a cross-cell wall heme-transfer cascade. The ability to acquire iron from host tissues is a major virulence factor of pathogenic microorganisms. Required for biofilm formation. The protein is GPI-anchored hemophore PGA7 of Candida albicans (strain SC5314 / ATCC MYA-2876) (Yeast).